We begin with the raw amino-acid sequence, 185 residues long: Ribosome-recycling factor (185 aa).

The segment at 136-161 (MDSLKTDEKKGEIGEDDRKRRETEVQ) is disordered.

This sequence belongs to the RRF family.

The protein resides in the cytoplasm. Functionally, responsible for the release of ribosomes from messenger RNA at the termination of protein biosynthesis. May increase the efficiency of translation by recycling ribosomes from one round of translation to another. This is Ribosome-recycling factor from Rhizorhabdus wittichii (strain DSM 6014 / CCUG 31198 / JCM 15750 / NBRC 105917 / EY 4224 / RW1) (Sphingomonas wittichii).